The primary structure comprises 239 residues: MQDPNADTEWNDILRKKGILPPKESLKELEEEAEEEQRILQQSVVKTYEDMTLEELDDHEDEFNEEDERAIEMYRRQRLAEWKVTKLKNKFGEVLEISGKDYVQEVTKAGEGLWVILHLYKQGIPLCALINQHLSGLARKFPDVKFIKAISTTCIPNYPDRNLPTIFVYLEGDIKAQFIGPLVFGGMNLTRDELEWKLSESGAIMTDLEENPKKPIEDVLLSSVRRSALMKRDSDSEGD.

Met1 is modified (N-acetylmethionine). One can recognise a Phosducin domain in the interval Glu32–Gly180. Phosphoserine is present on residues Ser43, Ser234, and Ser236. Residues Phe91–Asp239 form a thioredoxin fold region.

This sequence belongs to the phosducin family. Interacts (via thioredoxin fold region) with KDR/VEGFR2 (via juxtamembrane domain). Forms ternary complexes with the chaperonin CCT complex and actin substrate, leading to inhibition of actin folding. Interacts with XIAP (via BIR 3 and RING domain). Interacts with HSP90AA1 and HSP90AB1. N-terminal methionine acetylation destabilizes the protein.

The protein resides in the cytoplasm. It is found in the perinuclear region. It localises to the endoplasmic reticulum. Its function is as follows. Acts as a chaperone for the angiogenic VEGF receptor KDR/VEGFR2, increasing its abundance by inhibiting its ubiquitination and degradation. Inhibits the folding activity of the chaperonin-containing T-complex (CCT) which leads to inhibition of cytoskeletal actin folding. Acts as a chaperone during heat shock alongside HSP90 and HSP40/70 chaperone complexes. Modulates the activation of caspases during apoptosis. This chain is Phosducin-like protein 3 (PDCL3), found in Pongo abelii (Sumatran orangutan).